A 206-amino-acid polypeptide reads, in one-letter code: Imidazoleglycerol-phosphate dehydratase (206 aa).

The segment at 1-21 (MTALDSSRLLQPRTASVHRRT) is disordered.

The protein belongs to the imidazoleglycerol-phosphate dehydratase family.

It is found in the cytoplasm. The enzyme catalyses D-erythro-1-(imidazol-4-yl)glycerol 3-phosphate = 3-(imidazol-4-yl)-2-oxopropyl phosphate + H2O. It functions in the pathway amino-acid biosynthesis; L-histidine biosynthesis; L-histidine from 5-phospho-alpha-D-ribose 1-diphosphate: step 6/9. This chain is Imidazoleglycerol-phosphate dehydratase, found in Synechococcus sp. (strain JA-2-3B'a(2-13)) (Cyanobacteria bacterium Yellowstone B-Prime).